The sequence spans 527 residues: Palmitoleoyl-protein carboxylesterase NOTUM (527 aa).

Residues 1–19 (MKSYLILNTLLLSLLKING) form the signal peptide. 3 N-linked (GlcNAc...) asparagine glycosylation sites follow: asparagine 64, asparagine 86, and asparagine 104. Serine 203 functions as the Charge relay system in the catalytic mechanism. A glycan (N-linked (GlcNAc...) asparagine) is linked at asparagine 249. Active-site charge relay system residues include aspartate 311 and histidine 359. Residue asparagine 451 is glycosylated (N-linked (GlcNAc...) asparagine).

This sequence belongs to the pectinacetylesterase family. Notum subfamily. Expressed in the anterior pole.

The protein resides in the secreted. The enzyme catalyses [Wnt protein]-O-(9Z)-hexadecenoyl-L-serine + H2O = [Wnt protein]-L-serine + (9Z)-hexadecenoate + H(+). Carboxylesterase that acts as a key negative regulator of the Wnt signaling pathway. Acts by specifically mediating depalmitoleoylation of WNT proteins. Serine palmitoleoylation of WNT proteins is required for efficient binding to frizzled receptors. Promotes head regeneration following amputation by inhibiting the Wnt signaling pathway. The polypeptide is Palmitoleoyl-protein carboxylesterase NOTUM (Schmidtea mediterranea (Freshwater planarian flatworm)).